Reading from the N-terminus, the 163-residue chain is Outer membrane protein assembly factor BamE (163 aa).

The N-terminal stretch at 1–22 (MINKKQSLTLLSAIALSVSLSA) is a signal peptide. A lipid anchor (N-palmitoyl cysteine) is attached at cysteine 23. Cysteine 23 carries the S-diacylglycerol cysteine lipid modification. The segment at 122–163 (EQSKLPMVNTTESAPQVPAQRPDEKPLVKENQTEAQVQKPIK) is disordered. Positions 142–153 (RPDEKPLVKENQ) are enriched in basic and acidic residues.

It belongs to the BamE family. As to quaternary structure, part of the Bam complex.

Its subcellular location is the cell outer membrane. Its function is as follows. Part of the outer membrane protein assembly complex, which is involved in assembly and insertion of beta-barrel proteins into the outer membrane. The protein is Outer membrane protein assembly factor BamE of Shewanella oneidensis (strain ATCC 700550 / JCM 31522 / CIP 106686 / LMG 19005 / NCIMB 14063 / MR-1).